The following is a 267-amino-acid chain: PHD finger protein ALFIN-LIKE 7 (267 aa).

A disordered region spans residues 162 to 207; that stretch reads TKVSNGSSKSNKSNPKPSKQSNSNSKPAKPPQPKDEEDSGPEGTED. The segment covering 165 to 188 has biased composition (low complexity); it reads SNGSSKSNKSNPKPSKQSNSNSKP. Acidic residues predominate over residues 196 to 207; it reads DEEDSGPEGTED. The PHD-type zinc-finger motif lies at 211–263; it reads AYMCGACGETYANGEFWICCDVCEKWFHGKCVRITPAKAEHIKQYKCPGCSSK.

It belongs to the Alfin family. In terms of assembly, interacts with H3K4me3 and to a lesser extent with H3K4me2.

The protein localises to the nucleus. Its function is as follows. Histone-binding component that specifically recognizes H3 tails trimethylated on 'Lys-4' (H3K4me3), which mark transcription start sites of virtually all active genes. This Oryza sativa subsp. japonica (Rice) protein is PHD finger protein ALFIN-LIKE 7.